Reading from the N-terminus, the 696-residue chain is Methionine--tRNA ligase (696 aa).

Positions 12-22 (PYANGAIHLGH) match the 'HIGH' region motif. Zn(2+)-binding residues include Cys-143, Cys-146, Cys-156, and Cys-159. The short motif at 336 to 340 (KMSKS) is the 'KMSKS' region element. Lys-339 contacts ATP. Residues 556–580 (SLAPAPEAQSQQRHAEHQQNEVTAE) are disordered. A tRNA-binding domain is found at 591–696 (DFMKVDLRIV…SGAQPGMRVK (106 aa)).

Belongs to the class-I aminoacyl-tRNA synthetase family. MetG type 1 subfamily. Homodimer. Zn(2+) serves as cofactor.

It is found in the cytoplasm. It carries out the reaction tRNA(Met) + L-methionine + ATP = L-methionyl-tRNA(Met) + AMP + diphosphate. Is required not only for elongation of protein synthesis but also for the initiation of all mRNA translation through initiator tRNA(fMet) aminoacylation. The protein is Methionine--tRNA ligase of Dechloromonas aromatica (strain RCB).